We begin with the raw amino-acid sequence, 91 residues long: MEFFTMCVLAAGIGMALGTLGTGIGQGLAVKSAVEGTSRNPGASGKILTTMMIGLAMIESLAIYALVVCLIILFANPYKDIALELAKSVAK.

2 helical membrane passes run 4 to 24 (FTMCVLAAGIGMALGTLGTGI) and 53 to 73 (IGLAMIESLAIYALVVCLIIL).

Belongs to the ATPase C chain family. In terms of assembly, F-type ATPases have 2 components, F(1) - the catalytic core - and F(0) - the membrane proton channel. F(1) has five subunits: alpha(3), beta(3), gamma(1), delta(1), epsilon(1). F(0) has three main subunits: a(1), b(2) and c(10-14). The alpha and beta chains form an alternating ring which encloses part of the gamma chain. F(1) is attached to F(0) by a central stalk formed by the gamma and epsilon chains, while a peripheral stalk is formed by the delta and b chains.

It is found in the cell inner membrane. In terms of biological role, f(1)F(0) ATP synthase produces ATP from ADP in the presence of a proton or sodium gradient. F-type ATPases consist of two structural domains, F(1) containing the extramembraneous catalytic core and F(0) containing the membrane proton channel, linked together by a central stalk and a peripheral stalk. During catalysis, ATP synthesis in the catalytic domain of F(1) is coupled via a rotary mechanism of the central stalk subunits to proton translocation. Its function is as follows. Key component of the F(0) channel; it plays a direct role in translocation across the membrane. A homomeric c-ring of between 10-14 subunits forms the central stalk rotor element with the F(1) delta and epsilon subunits. This is ATP synthase subunit c from Citrifermentans bemidjiense (strain ATCC BAA-1014 / DSM 16622 / JCM 12645 / Bem) (Geobacter bemidjiensis).